A 419-amino-acid polypeptide reads, in one-letter code: NF-kappa-B essential modulator (419 aa).

Residues 1–46 (MSRTPWKSQPCEMVQPSGGPAGDQDVLGEESSLGKPTMLHLPSEQG) are disordered. The tract at residues 1 to 197 (MSRTPWKSQP…REALQQQHSV (197 aa)) is required for interaction with and ubiquitination by MARCHF2. Residues Ser-31, Ser-43, Ser-68, and Ser-85 each carry the phosphoserine modification. Residues 44 to 111 (EQGAPETFQR…RLVERLSLEK (68 aa)) form an interaction with CHUK/IKBKB region. A coiled-coil region spans residues 100–353 (ARRLVERLSL…KTSCQESARI (254 aa)). Residues Lys-111, Lys-139, Lys-143, Lys-226, Lys-246, and Lys-264 each participate in a glycyl lysine isopeptide (Lys-Gly) (interchain with G-Cter in ubiquitin) cross-link. Residues 150–257 (LGELQESQSR…SVVSSERNRG (108 aa)) form an interaction with TANK region. Residues 242–350 (DNHIKSSVVS…SRLKTSCQES (109 aa)) are ubiquitin-binding (UBAN). Residues 246–365 (KSSVVSSERN…MRKRHVEVSQ (120 aa)) form a self-association region. The tract at residues 251-419 (SSERNRGLQL…LQIHVMECIE (169 aa)) is required for interaction with TNFAIP3. Lys-277 is covalently cross-linked (Glycyl lysine isopeptide (Lys-Gly) (interchain with G-Cter in SUMO); alternate). Lys-277 participates in a covalent cross-link: Glycyl lysine isopeptide (Lys-Gly) (interchain with G-Cter in ubiquitin); alternate. Residues Lys-283, Lys-285, Lys-292, and Lys-302 each participate in a glycyl lysine isopeptide (Lys-Gly) (interchain with G-Cter in ubiquitin) cross-link. A Glycyl lysine isopeptide (Lys-Gly) (interchain with G-Cter in SUMO); alternate cross-link involves residue Lys-309. Lys-309 participates in a covalent cross-link: Glycyl lysine isopeptide (Lys-Gly) (interchain with G-Cter in ubiquitin); alternate. A leucine-zipper region spans residues 322–343 (LAERKELLQEQLEQLQREYSRL). Lys-326 is covalently cross-linked (Glycyl lysine isopeptide (Lys-Gly) (interchain with G-Cter in ubiquitin)). The interval 363–394 (VSQPTLPPAPAHHSFHPALPSQRRSPPEEPPN) is disordered. Phosphoserine occurs at positions 376 and 387. The tract at residues 382 to 419 (PSQRRSPPEEPPNFCCPKCQYQAPDMDTLQIHVMECIE) is interaction with CYLD. The CCHC NOA-type zinc-finger motif lies at 389–419 (PEEPPNFCCPKCQYQAPDMDTLQIHVMECIE). A Zn(2+)-binding site is contributed by Cys-397. Residue Lys-399 forms a Glycyl lysine isopeptide (Lys-Gly) (interchain with G-Cter in ubiquitin) linkage. 3 residues coordinate Zn(2+): Cys-400, His-413, and Cys-417.

As to quaternary structure, homodimer; disulfide-linked. Component of the I-kappa-B-kinase (IKK) core complex consisting of CHUK, IKBKB and IKBKG; probably four alpha/CHUK-beta/IKBKB dimers are associated with four gamma/IKBKG subunits. The IKK core complex seems to associate with regulatory or adapter proteins to form a IKK-signalosome holo-complex. The IKK complex associates with TERF2IP/RAP1, leading to promote IKK-mediated phosphorylation of RELA/p65. Part of a complex composed of NCOA2, NCOA3, CHUK/IKKA, IKBKB, IKBKG and CREBBP. Interacts with COPS3, CYLD, NALP2, TRPC4AP and PIDD1. Interacts with ATM; the complex is exported from the nucleus. Interacts with TRAF6. Interacts with IKBKE. Interacts with TANK; the interaction is enhanced by IKBKE and TBK1. Part of a ternary complex consisting of TANK, IKBKB and IKBKG. Interacts with ZFAND5. Interacts with RIPK2. Interacts with TNIP1 and TNFAIP3; TNIP1 facilitates the TNFAIP3-mediated de-ubiquitination of IKBKG. Interacts with TNFAIP3; the interaction is induced by TNF stimulation and by polyubiquitin. Binds (via UBAN region) polyubiquitin; binds both 'Lys-63'-linked and linear polyubiquitin, with higher affinity for linear ubiquitin. Interacts with NLRP10. Interacts with TANK; this interaction increases in response to DNA damage. Interacts with USP10; this interaction increases in response to DNA damage. Interacts with ZC3H12A; this interaction increases in response to DNA damage. Interacts with IFIT5; the interaction synergizes the recruitment of IKK to MAP3K7 and enhances IKK phosphorylation. Interacts with TRIM29; this interaction induces IKBKG/NEMO ubiquitination and proteolytic degradation. Interacts with TRIM13; this interaction leads to IKBKG/NEMO ubiquitination. Interacts with ARFIP2. Interacts with RIPK1. Interacts with (ubiquitinated) BCL10; interaction with polyubiquitinated BCL10 via both 'Lys-63'-linked and linear ubiquitin is required for TCR-induced NF-kappa-B activation. Interacts with MARCHF2; during the late stages of macrophage viral and bacterial infection; the interaction leads to ubiquitination and degradation of IKBKG/NEMO. Post-translationally, phosphorylation at Ser-68 attenuates aminoterminal homodimerization. In terms of processing, polyubiquitinated on Lys-285 via 'Lys-63'-linked ubiquitin; the ubiquitination is mediated downstream of NOD2 and RIPK2 and probably plays a role in signaling by facilitating interactions with ubiquitin domain-containing proteins and activates the NF-kappa-B pathway. Polyubiquitinated on Lys-285 and Lys-399 through 'Lys-63'-linked ubiquitin; the ubiquitination is mediated by BCL10, MALT1 and TRAF6 and probably plays a role in signaling by facilitating interactions with ubiquitin domain-containing proteins and activates the NF-kappa-B pathway. Monoubiquitinated on Lys-277 and Lys-309; promotes nuclear export. Polyubiquitinated through 'Lys-27' by TRIM23; involved in antiviral innate and inflammatory responses. Linear polyubiquitinated on Lys-111, Lys-143, Lys-226, Lys-246, Lys-264, Lys-277, Lys-285, Lys-292, Lys-302, Lys-309 and Lys-326; the head-to-tail polyubiquitination is mediated by the LUBAC complex and plays a key role in NF-kappa-B activation. Deubiquitinated by USP10 in a TANK-dependent and -independent manner, leading to the negative regulation of NF-kappa-B signaling upon DNA damage. Ubiquitinated at Lys-326 by MARCHF2 following bacterial and viral infection which leads to its degradation. Sumoylated on Lys-277 and Lys-309 with SUMO1; the modification results in phosphorylation of Ser-85 by ATM leading to a replacement of the sumoylation by mono-ubiquitination on these residues. Post-translationally, neddylated by TRIM40, resulting in stabilization of NFKBIA and down-regulation of NF-kappa-B activity. In terms of processing, (Microbial infection) Cleaved by porcine reproductive and respiratory syndrome virus serine protease nsp4 after Glu-349. The cleavage inhibits NEMO proper function.

The protein localises to the cytoplasm. The protein resides in the nucleus. Functionally, regulatory subunit of the IKK core complex which phosphorylates inhibitors of NF-kappa-B thus leading to the dissociation of the inhibitor/NF-kappa-B complex and ultimately the degradation of the inhibitor. Its binding to scaffolding polyubiquitin plays a key role in IKK activation by multiple signaling receptor pathways. Can recognize and bind both 'Lys-63'-linked and linear polyubiquitin upon cell stimulation, with a much highr affinity for linear polyubiquitin. Could be implicated in NF-kappa-B-mediated protection from cytokine toxicity. Essential for viral activation of IRF3. Involved in TLR3- and IFIH1-mediated antiviral innate response; this function requires 'Lys-27'-linked polyubiquitination. The sequence is that of NF-kappa-B essential modulator (IKBKG) from Sus scrofa (Pig).